A 234-amino-acid polypeptide reads, in one-letter code: Ubiquitin thioesterase OTUB2 (234 aa).

An OTU domain is found at 40–231 (TAIRKTKGDG…TSHYNILYAA (192 aa)). Asp48 is an active-site residue. Cys51 serves as the catalytic Nucleophile. His224 is a catalytic residue.

Belongs to the peptidase C65 family. In terms of tissue distribution, widely expressed. Expressed at higher level in brain.

The enzyme catalyses Thiol-dependent hydrolysis of ester, thioester, amide, peptide and isopeptide bonds formed by the C-terminal Gly of ubiquitin (a 76-residue protein attached to proteins as an intracellular targeting signal).. Its function is as follows. Hydrolase that can remove conjugated ubiquitin from proteins in vitro and may therefore play an important regulatory role at the level of protein turnover by preventing degradation. Mediates deubiquitination of 'Lys-11'-,'Lys-48'- and 'Lys-63'-linked polyubiquitin chains, with a preference for 'Lys-63'-linked polyubiquitin chains. The chain is Ubiquitin thioesterase OTUB2 (OTUB2) from Homo sapiens (Human).